The chain runs to 367 residues: 3-dehydroquinate synthase (367 aa).

Residues 69 to 74 (DGEAFK), 103 to 107 (GVIGD), 127 to 128 (TT), lysine 140, and lysine 149 contribute to the NAD(+) site. The Zn(2+) site is built by glutamate 182, histidine 245, and histidine 262.

The protein belongs to the sugar phosphate cyclases superfamily. Dehydroquinate synthase family. Co(2+) serves as cofactor. Zn(2+) is required as a cofactor. Requires NAD(+) as cofactor.

Its subcellular location is the cytoplasm. It carries out the reaction 7-phospho-2-dehydro-3-deoxy-D-arabino-heptonate = 3-dehydroquinate + phosphate. It participates in metabolic intermediate biosynthesis; chorismate biosynthesis; chorismate from D-erythrose 4-phosphate and phosphoenolpyruvate: step 2/7. Catalyzes the conversion of 3-deoxy-D-arabino-heptulosonate 7-phosphate (DAHP) to dehydroquinate (DHQ). The chain is 3-dehydroquinate synthase from Pseudomonas syringae pv. syringae (strain B728a).